The primary structure comprises 1604 residues: Metabotropic glutamate receptor-like protein R (1604 aa).

Residues M1–C27 form the signal peptide. At N28 to K1149 the chain is on the extracellular side. The span at N38–N69 shows a compositional bias: low complexity. The segment at N38–N72 is disordered. A coiled-coil region spans residues D98–K133. Residues N213–N263 are disordered. 23 N-linked (GlcNAc...) asparagine glycosylation sites follow: N285, N327, N359, N375, N489, N498, N525, N577, N593, N624, N768, N837, N841, N851, N864, N876, N885, N888, N913, N967, N991, N1097, and N1109. Residues I1150 to T1170 form a helical membrane-spanning segment. Residues F1171–P1184 are Cytoplasmic-facing. The chain crosses the membrane as a helical span at residues V1185–F1205. The Extracellular portion of the chain corresponds to S1206–T1211. A helical transmembrane segment spans residues C1212–I1232. Over K1233–Y1256 the chain is Cytoplasmic. Residues L1257–I1277 form a helical membrane-spanning segment. Topologically, residues A1278–Y1304 are extracellular. Residues I1305–V1325 traverse the membrane as a helical segment. The Cytoplasmic portion of the chain corresponds to I1326–E1340. Residues F1341–I1361 form a helical membrane-spanning segment. The Extracellular portion of the chain corresponds to G1362–D1372. A helical membrane pass occupies residues F1373–A1393. Over P1394 to D1604 the chain is Cytoplasmic. The segment at T1457 to D1604 is disordered. Composition is skewed to low complexity over residues F1471–N1527 and S1534–S1556. The segment covering N1563 to S1572 has biased composition (basic residues). The span at L1573 to P1584 shows a compositional bias: polar residues.

Belongs to the G-protein coupled receptor 3 family. GABA-B receptor subfamily.

Its subcellular location is the membrane. The protein is Metabotropic glutamate receptor-like protein R (grlR) of Dictyostelium discoideum (Social amoeba).